The sequence spans 167 residues: Transmembrane protein 229B (167 aa).

The Cytoplasmic portion of the chain corresponds to 1 to 14 (MASAEPLTALSRWY). The helical transmembrane segment at 15 to 35 (LYAIHGYFCEVMFTAAWEFVV) threads the bilayer. The Extracellular segment spans residues 36-40 (NLNWK). The helical transmembrane segment at 41–61 (FPGVTSVWALFIYGTSILIVE) threads the bilayer. The Cytoplasmic segment spans residues 62–73 (RMYLRLRGRCPL). A helical membrane pass occupies residues 74–94 (LLRCLIYTLWTYLWEFTTGFI). Over 95-109 (LRQFNACPWDYSQFD) the chain is Extracellular. The helical transmembrane segment at 110-130 (FDFMGLITLEYAVPWFCGALI) threads the bilayer. The Cytoplasmic segment spans residues 131-167 (MEQFIIRNTLRLRFDKDAEPGEPSGALALANGHVKTD).

Belongs to the TMEM229 family.

It localises to the membrane. This chain is Transmembrane protein 229B (TMEM229B), found in Homo sapiens (Human).